The sequence spans 443 residues: Probable D-serine dehydratase (443 aa).

K106 carries the N6-(pyridoxal phosphate)lysine modification.

This sequence belongs to the serine/threonine dehydratase family. DsdA subfamily. Requires pyridoxal 5'-phosphate as cofactor.

The enzyme catalyses D-serine = pyruvate + NH4(+). This chain is Probable D-serine dehydratase, found in Cupriavidus pinatubonensis (strain JMP 134 / LMG 1197) (Cupriavidus necator (strain JMP 134)).